We begin with the raw amino-acid sequence, 304 residues long: Ribonuclease Z (304 aa).

Positions 63, 65, 67, 68, 141, 208, and 266 each coordinate Zn(2+). Aspartate 67 functions as the Proton acceptor in the catalytic mechanism.

The protein belongs to the RNase Z family. In terms of assembly, homodimer. Requires Zn(2+) as cofactor.

It carries out the reaction Endonucleolytic cleavage of RNA, removing extra 3' nucleotides from tRNA precursor, generating 3' termini of tRNAs. A 3'-hydroxy group is left at the tRNA terminus and a 5'-phosphoryl group is left at the trailer molecule.. In terms of biological role, zinc phosphodiesterase, which displays some tRNA 3'-processing endonuclease activity. Probably involved in tRNA maturation, by removing a 3'-trailer from precursor tRNA. The sequence is that of Ribonuclease Z from Chlamydia muridarum (strain MoPn / Nigg).